The primary structure comprises 299 residues: 4-sulfomuconolactone hydrolase (299 aa).

Belongs to the metallo-dependent hydrolases superfamily. Sulfomuconolactone hydrolase family. In terms of assembly, monomer. Zn(2+) is required as a cofactor.

The enzyme catalyses 4-sulfomuconolactone + H2O = maleylacetate + sulfite + 2 H(+). In terms of biological role, involved in the degradation of 4-sulfocatechol which is a central intermediate in the degradation of substituted sulfonated benzenes. Catalyzes the hydrolytical desulfonation of 4-sulfomuconolactone to yield maleylacetate. The sequence is that of 4-sulfomuconolactone hydrolase from Rhizobium radiobacter (Agrobacterium tumefaciens).